The primary structure comprises 297 residues: MAFSITVPASTANLGPGFDSIGLALNRYLHLEVEQASKWSFICSSPGLENIGTDNLVTKAATFASKEWGKVLPPCQVVMKNDIPLSKGFGSSAAAIVAGIELAASVCGQFASKAEKARLASLWEGHPDNVAASIYGGLVIGTHSEESTEILHVEAPNIDLVALIPSKTLATKKARAVLPDMLSYKEAVQASSVANVLAAALVKQDWELVGKMMLADRFHQPYRQQLIPHLPDVCAYAQADEDAYGAALSGAGPIILCLVKEGKGEAFASRLHKQFPACRAEVMRPAVQGSAVSIAQA.

84–94 (PLSKGFGSSAA) serves as a coordination point for ATP.

This sequence belongs to the GHMP kinase family. Homoserine kinase subfamily.

It localises to the cytoplasm. It carries out the reaction L-homoserine + ATP = O-phospho-L-homoserine + ADP + H(+). It participates in amino-acid biosynthesis; L-threonine biosynthesis; L-threonine from L-aspartate: step 4/5. Its function is as follows. Catalyzes the ATP-dependent phosphorylation of L-homoserine to L-homoserine phosphate. This Shouchella clausii (strain KSM-K16) (Alkalihalobacillus clausii) protein is Homoserine kinase.